The following is a 193-amino-acid chain: Interferon lambda-2 (193 aa).

The first 19 residues, 1–19 (MLLLLLPLLLAAVLTRTQA), serve as a signal peptide directing secretion. Asn105 carries an N-linked (GlcNAc...) asparagine glycan.

This sequence belongs to the lambda interferon family.

Its subcellular location is the secreted. In terms of biological role, cytokine with antiviral, antitumour and immunomodulatory activities. Plays a critical role in the antiviral host defense, predominantly in the epithelial tissues. Acts as a ligand for the heterodimeric class II cytokine receptor composed of IL10RB and IFNLR1, and receptor engagement leads to the activation of the JAK/STAT signaling pathway resulting in the expression of IFN-stimulated genes (ISG), which mediate the antiviral state. Has a restricted receptor distribution and therefore restricted targets: is primarily active in epithelial cells and this cell type-selective action is because of the epithelial cell-specific expression of its receptor IFNLR1. Seems not to be essential for early virus-activated host defense in vaginal infection, but plays an important role in Toll-like receptor (TLR)-induced antiviral defense. Plays a significant role in the antiviral immune defense in the intestinal epithelium. Exerts an immunomodulatory effect by up-regulating MHC class I antigen expression. This chain is Interferon lambda-2 (Ifnl2), found in Mus musculus (Mouse).